A 320-amino-acid chain; its full sequence is Acetyl-coenzyme A carboxylase carboxyl transferase subunit alpha (320 aa).

The 255-residue stretch at Ser41–Asp295 folds into the CoA carboxyltransferase C-terminal domain.

It belongs to the AccA family. As to quaternary structure, acetyl-CoA carboxylase is a heterohexamer composed of biotin carboxyl carrier protein (AccB), biotin carboxylase (AccC) and two subunits each of ACCase subunit alpha (AccA) and ACCase subunit beta (AccD).

It is found in the cytoplasm. It carries out the reaction N(6)-carboxybiotinyl-L-lysyl-[protein] + acetyl-CoA = N(6)-biotinyl-L-lysyl-[protein] + malonyl-CoA. Its pathway is lipid metabolism; malonyl-CoA biosynthesis; malonyl-CoA from acetyl-CoA: step 1/1. Component of the acetyl coenzyme A carboxylase (ACC) complex. First, biotin carboxylase catalyzes the carboxylation of biotin on its carrier protein (BCCP) and then the CO(2) group is transferred by the carboxyltransferase to acetyl-CoA to form malonyl-CoA. This chain is Acetyl-coenzyme A carboxylase carboxyl transferase subunit alpha, found in Nitrobacter winogradskyi (strain ATCC 25391 / DSM 10237 / CIP 104748 / NCIMB 11846 / Nb-255).